We begin with the raw amino-acid sequence, 100 residues long: NADH-quinone oxidoreductase subunit K (100 aa).

3 helical membrane-spanning segments follow: residues 4 to 24, 28 to 48, and 60 to 80; these read LSHG…SLVM, ILFM…ALVV, and IMYI…LALL.

The protein belongs to the complex I subunit 4L family. In terms of assembly, NDH-1 is composed of 13 different subunits. Subunits NuoA, H, J, K, L, M, N constitute the membrane sector of the complex.

The protein localises to the cell membrane. It catalyses the reaction a quinone + NADH + 5 H(+)(in) = a quinol + NAD(+) + 4 H(+)(out). NDH-1 shuttles electrons from NADH, via FMN and iron-sulfur (Fe-S) centers, to quinones in the respiratory chain. The immediate electron acceptor for the enzyme in this species is believed to be ubiquinone. Couples the redox reaction to proton translocation (for every two electrons transferred, four hydrogen ions are translocated across the cytoplasmic membrane), and thus conserves the redox energy in a proton gradient. This chain is NADH-quinone oxidoreductase subunit K, found in Buchnera aphidicola subsp. Baizongia pistaciae (strain Bp).